The chain runs to 89 residues: Large ribosomal subunit protein uL30 (89 aa).

Belongs to the universal ribosomal protein uL30 family. As to quaternary structure, part of the 50S ribosomal subunit.

This Myxococcus xanthus (strain DK1622) protein is Large ribosomal subunit protein uL30.